The chain runs to 545 residues: MTTNYIFVTGGVVSSLGKGIAAASLAAILEARGLNVTIMKLDPYINVDPGTMSPIQHGEVFVTEDGAETDLDLGHYERFIRTKMTRRNNFTTGRIYSDVLRKERRGDYLGATVQVIPHITNAIKERVLAGGEGHDVVLVEIGGTVGDIESLPFLEAIRQMAVEIGREHTLFMHLTLVPYMAAAGEVKTKPTQHSVKELLSIGIQPDILICRSDRAVPANERAKIALFCNVPEKAVISLKDVDSIYKIPGLLKSQGLDDYICKRFSLTCPEANLAEWEQVIYEEANPAGEVTIGMVGKYIELPDAYKSVIEALKHGGLKNRVTVNIKLIDSQDVETRGVEILKDLDAILIPGGFGYRGVEGKIATARYARENNIPYLGICLGMQVALIEFARNVAGMENANSTEFVPDCKYPVVALITEWRDEDGNVEVRSEKSDLGGTMRLGAQQCQLSDDSLVRQLYGEPTITERHRHRYEVNNMLLKPIEAAGLRVAGRSGDDQLVEIIEVPNHPWFVACQFHPEFTSTPRDGHPLFAGFVKAASEYQKRQAK.

The amidoligase domain stretch occupies residues 1–266 (MTTNYIFVTG…DDYICKRFSL (266 aa)). A CTP-binding site is contributed by S14. Position 14 (S14) interacts with UTP. Residues 15-20 (SLGKGI) and D72 each bind ATP. Residues D72 and E140 each coordinate Mg(2+). CTP-binding positions include 147–149 (DIE), 187–192 (KTKPTQ), and K223. Residues 187 to 192 (KTKPTQ) and K223 each bind UTP. Position 239 to 241 (239 to 241 (KDV)) interacts with ATP. The Glutamine amidotransferase type-1 domain maps to 291–542 (TIGMVGKYIE…VKAASEYQKR (252 aa)). An L-glutamine-binding site is contributed by G352. The active-site Nucleophile; for glutamine hydrolysis is the C379. Residues 380–383 (LGMQ), E403, and R470 each bind L-glutamine. Catalysis depends on residues H515 and E517.

Belongs to the CTP synthase family. Homotetramer.

The enzyme catalyses UTP + L-glutamine + ATP + H2O = CTP + L-glutamate + ADP + phosphate + 2 H(+). It catalyses the reaction L-glutamine + H2O = L-glutamate + NH4(+). It carries out the reaction UTP + NH4(+) + ATP = CTP + ADP + phosphate + 2 H(+). It functions in the pathway pyrimidine metabolism; CTP biosynthesis via de novo pathway; CTP from UDP: step 2/2. With respect to regulation, allosterically activated by GTP, when glutamine is the substrate; GTP has no effect on the reaction when ammonia is the substrate. The allosteric effector GTP functions by stabilizing the protein conformation that binds the tetrahedral intermediate(s) formed during glutamine hydrolysis. Inhibited by the product CTP, via allosteric rather than competitive inhibition. In terms of biological role, catalyzes the ATP-dependent amination of UTP to CTP with either L-glutamine or ammonia as the source of nitrogen. Regulates intracellular CTP levels through interactions with the four ribonucleotide triphosphates. In Klebsiella pneumoniae subsp. pneumoniae (strain ATCC 700721 / MGH 78578), this protein is CTP synthase.